Consider the following 180-residue polypeptide: Flavin prenyltransferase UbiX (180 aa).

Residues 9-11 (GAS), Ser-33, 84-87 (SITT), and Arg-119 each bind FMN. Dimethylallyl phosphate-binding residues include Tyr-149 and Arg-165.

Belongs to the UbiX/PAD1 family.

It catalyses the reaction dimethylallyl phosphate + FMNH2 = prenylated FMNH2 + phosphate. Flavin prenyltransferase that catalyzes the synthesis of the prenylated FMN cofactor (prenyl-FMN) for 4-hydroxy-3-polyprenylbenzoic acid decarboxylase UbiD. The prenyltransferase is metal-independent and links a dimethylallyl moiety from dimethylallyl monophosphate (DMAP) to the flavin N5 and C6 atoms of FMN. The protein is Flavin prenyltransferase UbiX of Thermoplasma acidophilum (strain ATCC 25905 / DSM 1728 / JCM 9062 / NBRC 15155 / AMRC-C165).